The chain runs to 145 residues: D-aminoacyl-tRNA deacylase (145 aa).

Residues 137–138 carry the Gly-cisPro motif, important for rejection of L-amino acids motif; sequence GP.

It belongs to the DTD family. As to quaternary structure, homodimer.

Its subcellular location is the cytoplasm. The catalysed reaction is glycyl-tRNA(Ala) + H2O = tRNA(Ala) + glycine + H(+). It carries out the reaction a D-aminoacyl-tRNA + H2O = a tRNA + a D-alpha-amino acid + H(+). Its function is as follows. An aminoacyl-tRNA editing enzyme that deacylates mischarged D-aminoacyl-tRNAs. Also deacylates mischarged glycyl-tRNA(Ala), protecting cells against glycine mischarging by AlaRS. Acts via tRNA-based rather than protein-based catalysis; rejects L-amino acids rather than detecting D-amino acids in the active site. By recycling D-aminoacyl-tRNA to D-amino acids and free tRNA molecules, this enzyme counteracts the toxicity associated with the formation of D-aminoacyl-tRNA entities in vivo and helps enforce protein L-homochirality. This Legionella pneumophila (strain Paris) protein is D-aminoacyl-tRNA deacylase.